The primary structure comprises 509 residues: UDP-N-acetylmuramoylalanine--D-glutamate ligase (509 aa).

Residue 116 to 122 (GTNGKST) participates in ATP binding.

The protein belongs to the MurCDEF family.

It is found in the cytoplasm. It catalyses the reaction UDP-N-acetyl-alpha-D-muramoyl-L-alanine + D-glutamate + ATP = UDP-N-acetyl-alpha-D-muramoyl-L-alanyl-D-glutamate + ADP + phosphate + H(+). Its pathway is cell wall biogenesis; peptidoglycan biosynthesis. In terms of biological role, cell wall formation. Catalyzes the addition of glutamate to the nucleotide precursor UDP-N-acetylmuramoyl-L-alanine (UMA). The protein is UDP-N-acetylmuramoylalanine--D-glutamate ligase of Wolbachia pipientis wMel.